The primary structure comprises 432 residues: Alpha-enolase (432 aa).

A Mg(2+)-binding site is contributed by S40. Substrate-binding residues include H158 and E167. E210 (proton donor) is an active-site residue. Residues D245, E293, and D318 each coordinate Mg(2+). 2 residues coordinate substrate: E293 and D318. K343 acts as the Proton acceptor in catalysis. Residues S370–S373 and K394 contribute to the substrate site.

It belongs to the enolase family. In terms of assembly, dimer. Mg(2+) serves as cofactor.

The protein resides in the cytoplasm. The enzyme catalyses (2R)-2-phosphoglycerate = phosphoenolpyruvate + H2O. The protein operates within carbohydrate degradation; glycolysis; pyruvate from D-glyceraldehyde 3-phosphate: step 4/5. Multifunctional enzyme that, as well as its role in glycolysis, plays a part in various processes such as growth control, hypoxia tolerance and allergic responses. This Thunnus albacares (Yellowfin tuna) protein is Alpha-enolase.